Reading from the N-terminus, the 1065-residue chain is NLR family CARD domain-containing protein 3 (1065 aa).

Residues 1 to 10 (MRKQEVRTGR) show a composition bias toward basic and acidic residues. Residues 1–62 (MRKQEVRTGR…PLGPCSNDSR (62 aa)) form a disordered region. The NACHT domain maps to 139–460 (RVSITIGVAG…YCFTHLSLQE (322 aa)). 145 to 152 (GVAGMGKT) contacts ATP. The TRAF6-binding motif lies at 457–460 (SLQE). 16 LRR repeats span residues 617–639 (EANLSLSLSQGVLQSLLPQLLYC), 641–663 (KLRLDTNQFQDPVMELLGSVLSG), 665–688 (DCRIQKISLAENQISNKGAKALAR), 693–716 (NRSLTSLDLRGNSIGPQGAKALAD), 721–744 (NRTLTSLSLQGNTVRDDGARSMAE), 749–772 (NRTLSMLHLQKNSIGPMGAQRMAD), 777–800 (NRSLKELMFSSNSIGDGGAKALAE), 805–828 (NQGLESLDLQSNSISDAGVAALMG), 833–856 (NQTLLSLSLRENSISPEGAQAIAH), 861–884 (NSTLKNLDLTANLLHDQGARAIAV), 889–912 (NRTLTSLHLQWNFIQAGAAQALGQ), 917–940 (NRSLTSLDLQENAIGDDGACAVAR), 945–968 (NTALTALYLQVASIGASGAQVLGE), 973–996 (NRTLEILDLRGNAIGVAGAKALAN), 1001–1029 (NSSLRRLNLQENSLGMDGAICIATALSGN), and 1031–1052 (RLQHINLQGNHIGDSGARMISE).

This sequence belongs to the NLRP family. Directly interacts (via CARD) with TMEM173/STING; this interaction reduces TMEM173 trafficking to the perinuclear region in response to interferon stimulatory DNA. Also interacts, but to a lesser extent, with TBK1. Interacts with TRAF6; this interaction results in decreased TRAF6 'Lys-63'-linked polyubiquitination, but leaves 'Lys-48'-linked chains unchanged, promoting TRAF6 protein degradation. Interacts with PIK3R1/PIK3R2; this interaction disrupts the association between PIK3R1/PIK3R2 and the p110 catalytic subunit PIK3CA/PIK3CB/PIK3CD and reduces PIK3R1/PIK3R2 activation. Weakly interacts with PYCARD/ASC. Interacts with CASP1 and CASP5.

The protein resides in the cytoplasm. In terms of biological role, negative regulator of the innate immune response. Attenuates signaling pathways activated by Toll-like receptors (TLRs) and the DNA sensor STING/TMEM173 in response to pathogen-associated molecular patterns, such as intracellular poly(dA:dT), but not poly(I:C), or in response to DNA virus infection, including that of Herpes simplex virus 1 (HSV1). May affect TLR4 signaling by acting at the level of TRAF6 ubiquitination, decreasing the activating 'Lys-63'-linked ubiquitination and leaving unchanged the degradative 'Lys-48'-linked ubiquitination. Inhibits the PI3K-AKT-mTOR pathway possibly by directly interacting with the posphatidylinositol 3-kinase regulatory subunit p85 (PIK3R1/PIK3R2) and disrupting the association between PIK3R1/PIK3R2 and the catalytic subunit p110 (PIK3CA/PIK3CB/PIK3CD) and reducing PIK3R1/PIK3R2 activation. Via its regulation of the PI3K-AKT-mTOR pathway, controls cell proliferation, predominantly in intestinal epithelial cells. May also affect NOD1- or NOD2-mediated NF-kappa-B activation. Might also affect the inflammatory response by preventing NLRP3 inflammasome formation, CASP1 cleavage and IL1B maturation. This Homo sapiens (Human) protein is NLR family CARD domain-containing protein 3 (NLRC3).